We begin with the raw amino-acid sequence, 118 residues long: Small ribosomal subunit protein uS13 (118 aa).

The disordered stretch occupies residues K92–K118.

The protein belongs to the universal ribosomal protein uS13 family. Part of the 30S ribosomal subunit. Forms a loose heterodimer with protein S19. Forms two bridges to the 50S subunit in the 70S ribosome.

In terms of biological role, located at the top of the head of the 30S subunit, it contacts several helices of the 16S rRNA. In the 70S ribosome it contacts the 23S rRNA (bridge B1a) and protein L5 of the 50S subunit (bridge B1b), connecting the 2 subunits; these bridges are implicated in subunit movement. Contacts the tRNAs in the A and P-sites. The polypeptide is Small ribosomal subunit protein uS13 (Wigglesworthia glossinidia brevipalpis).